Reading from the N-terminus, the 110-residue chain is UPF0060 membrane protein Rpal_4363 (110 aa).

4 helical membrane-spanning segments follow: residues 4–24 (LLTF…FWAW), 31–51 (PLWL…LTLA), 59–79 (AYAA…WAIE), and 88–108 (VIGA…PRAL).

The protein belongs to the UPF0060 family.

The protein resides in the cell inner membrane. The polypeptide is UPF0060 membrane protein Rpal_4363 (Rhodopseudomonas palustris (strain TIE-1)).